The primary structure comprises 847 residues: Protein HIR2 (847 aa).

WD repeat units lie at residues 10-46 (LHDGQLTQCEVDDNKLYIIGGKYLSIWDSQTLLNAAT), 113-153 (KDNE…LKSS), 155-194 (ELKSKPISIITDPLGQLLTVILQNRSVQIYQYDSHGTTKL), 259-305 (KFSP…PLFD), and 309-348 (VVNSYITDLEWDNSGLGLFAISQDGQLVIFAFQENELGDV). The tract at residues 368 to 399 (PFKPKAEEPDTKLPPNKTAQQTTTNSKKQPKA) is disordered. A compositionally biased stretch (polar residues) spans 384–394 (KTAQQTTTNSK). WD repeat units lie at residues 508–548 (RKDN…IYVT) and 558–597 (PMLLGVPVSFLEGSGDYLLCITSIGQMYCWNVNTGKIAFP).

It belongs to the WD repeat HIR1 family.

The protein localises to the nucleus. In terms of biological role, required for replication-independent chromatin assembly and for the periodic repression of histone gene transcription during the cell cycle. The chain is Protein HIR2 (HIR2) from Kluyveromyces lactis (strain ATCC 8585 / CBS 2359 / DSM 70799 / NBRC 1267 / NRRL Y-1140 / WM37) (Yeast).